Reading from the N-terminus, the 177-residue chain is UPF0340 protein STH78 (177 aa).

The protein belongs to the UPF0340 family.

This chain is UPF0340 protein STH78, found in Symbiobacterium thermophilum (strain DSM 24528 / JCM 14929 / IAM 14863 / T).